The chain runs to 466 residues: GTP cyclohydrolase 1 (466 aa).

Zn(2+) contacts are provided by Cys342, His345, and Cys416.

This sequence belongs to the GTP cyclohydrolase I family. As to quaternary structure, homodimer.

The catalysed reaction is GTP + H2O = 7,8-dihydroneopterin 3'-triphosphate + formate + H(+). Its pathway is cofactor biosynthesis; 7,8-dihydroneopterin triphosphate biosynthesis; 7,8-dihydroneopterin triphosphate from GTP: step 1/1. Its function is as follows. GTP cyclohydrolase 1 is the first enzyme in the biosynthetic pathway leading to folic acid. This is GTP cyclohydrolase 1 (GCH1) from Arabidopsis thaliana (Mouse-ear cress).